We begin with the raw amino-acid sequence, 313 residues long: Ornithine carbamoyltransferase (313 aa).

Carbamoyl phosphate contacts are provided by residues 57–60 (STRT), Arg108, and 135–138 (HPTQ). L-ornithine-binding positions include Asn167, Asp231, and 235–236 (SM). Carbamoyl phosphate-binding positions include 272–273 (CL) and Arg300.

Belongs to the aspartate/ornithine carbamoyltransferase superfamily. OTCase family.

It localises to the cytoplasm. The catalysed reaction is carbamoyl phosphate + L-ornithine = L-citrulline + phosphate + H(+). The protein operates within amino-acid biosynthesis; L-arginine biosynthesis; L-arginine from L-ornithine and carbamoyl phosphate: step 1/3. Its function is as follows. Reversibly catalyzes the transfer of the carbamoyl group from carbamoyl phosphate (CP) to the N(epsilon) atom of ornithine (ORN) to produce L-citrulline. This Thermotoga petrophila (strain ATCC BAA-488 / DSM 13995 / JCM 10881 / RKU-1) protein is Ornithine carbamoyltransferase.